The primary structure comprises 250 residues: 1-(5-phosphoribosyl)-5-[(5-phosphoribosylamino)methylideneamino] imidazole-4-carboxamide isomerase (250 aa).

D12 acts as the Proton acceptor in catalysis. D133 serves as the catalytic Proton donor.

Belongs to the HisA/HisF family.

Its subcellular location is the cytoplasm. It carries out the reaction 1-(5-phospho-beta-D-ribosyl)-5-[(5-phospho-beta-D-ribosylamino)methylideneamino]imidazole-4-carboxamide = 5-[(5-phospho-1-deoxy-D-ribulos-1-ylimino)methylamino]-1-(5-phospho-beta-D-ribosyl)imidazole-4-carboxamide. The protein operates within amino-acid biosynthesis; L-histidine biosynthesis; L-histidine from 5-phospho-alpha-D-ribose 1-diphosphate: step 4/9. The sequence is that of 1-(5-phosphoribosyl)-5-[(5-phosphoribosylamino)methylideneamino] imidazole-4-carboxamide isomerase from Zymomonas mobilis subsp. mobilis (strain ATCC 31821 / ZM4 / CP4).